The primary structure comprises 274 residues: Ceramide synthase (274 aa).

Residues 34–261 (ADAVIVSARL…ICRGACRLFW (228 aa)) enclose the TLC domain. Transmembrane regions (helical) follow at residues 130 to 150 (FLMV…SVVW), 159 to 179 (LGCM…KILI), 194 to 214 (ALML…LYWA), and 223 to 243 (LLAV…LLLA).

In terms of tissue distribution, expressed in testis. Expressed in the retina with higher expression levels in the macular than in the peripheral region.

Its subcellular location is the golgi apparatus membrane. The protein resides in the endoplasmic reticulum membrane. The enzyme catalyses sphing-4-enine + octadecanoyl-CoA = N-octadecanoylsphing-4-enine + CoA + H(+). It catalyses the reaction eicosanoyl-CoA + sphing-4-enine = N-eicosanoyl-sphing-4-enine + CoA + H(+). The catalysed reaction is sphing-4-enine + hexadecanoyl-CoA = N-hexadecanoylsphing-4-enine + CoA + H(+). Functionally, involved in ceramide synthesis. The polypeptide is Ceramide synthase (Homo sapiens (Human)).